Reading from the N-terminus, the 172-residue chain is NADH-ubiquinone oxidoreductase chain 6 (172 aa).

The next 6 helical transmembrane spans lie at 1-21, 25-45, 48-68, 86-106, 108-128, and 141-161; these read MLSL…VVVL, PYFS…IVLY, GTFL…VVFV, VIWF…MSFN, FFLD…IFGA, and LILV…LVVV.

It belongs to the complex I subunit 6 family.

It is found in the mitochondrion membrane. The catalysed reaction is a ubiquinone + NADH + 5 H(+)(in) = a ubiquinol + NAD(+) + 4 H(+)(out). Functionally, core subunit of the mitochondrial membrane respiratory chain NADH dehydrogenase (Complex I) that is believed to belong to the minimal assembly required for catalysis. Complex I functions in the transfer of electrons from NADH to the respiratory chain. The immediate electron acceptor for the enzyme is believed to be ubiquinone. The protein is NADH-ubiquinone oxidoreductase chain 6 (MT-ND6) of Petromyzon marinus (Sea lamprey).